Here is a 277-residue protein sequence, read N- to C-terminus: Pantothenate synthetase (277 aa).

ATP is bound at residue 26-33 (MGNLHEGH). Catalysis depends on H33, which acts as the Proton donor. Q57 contributes to the (R)-pantoate binding site. Q57 serves as a coordination point for beta-alanine. 144–147 (GKKD) provides a ligand contact to ATP. Position 150 (Q150) interacts with (R)-pantoate. ATP contacts are provided by residues V173 and 181–184 (LSSR).

Belongs to the pantothenate synthetase family. As to quaternary structure, homodimer.

It localises to the cytoplasm. The catalysed reaction is (R)-pantoate + beta-alanine + ATP = (R)-pantothenate + AMP + diphosphate + H(+). The protein operates within cofactor biosynthesis; (R)-pantothenate biosynthesis; (R)-pantothenate from (R)-pantoate and beta-alanine: step 1/1. Functionally, catalyzes the condensation of pantoate with beta-alanine in an ATP-dependent reaction via a pantoyl-adenylate intermediate. The chain is Pantothenate synthetase from Paraburkholderia phymatum (strain DSM 17167 / CIP 108236 / LMG 21445 / STM815) (Burkholderia phymatum).